The following is a 127-amino-acid chain: Modulator protein MzrA (127 aa).

Residues 1–11 (MRKPRVTLRHL) are Cytoplasmic-facing. The helical transmembrane segment at 12–31 (AWSTMLLMVLGTGMLFWSAV) threads the bilayer. Over 32–127 (RQQESTLAIR…RLRDAPHRMG (96 aa)) the chain is Periplasmic.

The protein belongs to the MzrA family. In terms of assembly, interacts with EnvZ.

It is found in the cell inner membrane. In terms of biological role, modulates the activity of the EnvZ/OmpR two-component regulatory system, probably by directly modulating EnvZ enzymatic activity and increasing stability of phosphorylated OmpR. In Citrobacter rodentium (strain ICC168) (Citrobacter freundii biotype 4280), this protein is Modulator protein MzrA.